Here is a 188-residue protein sequence, read N- to C-terminus: Peptide deformylase (188 aa).

The Fe cation site is built by Cys-109 and His-152. Residue Glu-153 is part of the active site. Fe cation is bound at residue His-156.

It belongs to the polypeptide deformylase family. Fe(2+) serves as cofactor.

The catalysed reaction is N-terminal N-formyl-L-methionyl-[peptide] + H2O = N-terminal L-methionyl-[peptide] + formate. Removes the formyl group from the N-terminal Met of newly synthesized proteins. Requires at least a dipeptide for an efficient rate of reaction. N-terminal L-methionine is a prerequisite for activity but the enzyme has broad specificity at other positions. In Chloroflexus aggregans (strain MD-66 / DSM 9485), this protein is Peptide deformylase.